The primary structure comprises 86 residues: Large ribosomal subunit protein uL23c (86 aa).

Belongs to the universal ribosomal protein uL23 family. Part of the 50S ribosomal subunit.

Its subcellular location is the plastid. The protein resides in the chloroplast. Functionally, binds to 23S rRNA. The chain is Large ribosomal subunit protein uL23c (rpl23) from Chlorella vulgaris (Green alga).